Consider the following 1304-residue polypeptide: NAD-dependent protein deacetylase Sir2B (1304 aa).

One can recognise a Deacetylase sirtuin-type domain in the interval 28 to 466; that stretch reads TEEEKKKVKE…LISIHNIKMK (439 aa). NAD(+) contacts are provided by residues 53–72 and 274–277; these read GAGI…TGIW and QNID. Catalysis depends on His-294, which acts as the Proton acceptor. Residues Cys-302, Cys-305, Cys-327, and Cys-330 each coordinate Zn(2+). NAD(+) is bound by residues 371 to 373, 399 to 401, and Val-417; these read GSS and NYQ. 3 disordered regions span residues 545 to 585, 749 to 827, and 1154 to 1203; these read EHNN…SSSI, KVKS…DKDN, and EIKY…DDNN. 3 stretches are compositionally biased toward low complexity: residues 548 to 585, 756 to 806, and 1182 to 1203; these read NNNN…SSSI, NNNN…ISDH, and DDNN…DDNN.

This sequence belongs to the sirtuin family. Class IV subfamily. It depends on Zn(2+) as a cofactor.

The enzyme catalyses N(6)-acetyl-L-lysyl-[protein] + NAD(+) + H2O = 2''-O-acetyl-ADP-D-ribose + nicotinamide + L-lysyl-[protein]. In terms of biological role, regulates the expression of the surface antigen-coding var genes central to the malaria pathogenesis. Cooperates with Sir2A to mediate silencing and mutual exclusive expression of only 1 of the 60 subtelomeric var genes at a time, coding for functionally different but epitopically variant versions of the erythrocyte membrane protein 1 (PfEMP1) molecule, to evade the detection by host immune surveillance. This is NAD-dependent protein deacetylase Sir2B from Plasmodium falciparum (isolate 3D7).